A 535-amino-acid chain; its full sequence is Reticuline oxidase (535 aa).

The first 23 residues, 1–23 (MMCRSLTLRFFLFIVLLQTCVRG), serve as a signal peptide directing secretion. N42 carries an N-linked (GlcNAc...) asparagine glycan. In terms of domain architecture, FAD-binding PCMH-type spans 71–245 (TVSKPSFIVM…YAWKIKLLPV (175 aa)). The 6-(S-cysteinyl)-8alpha-(pros-histidyl)-FAD (His-Cys) cross-link spans 108–170 (HSYEGLSYTA…DTLGFTAGWC (63 aa)). N475 carries N-linked (GlcNAc...) asparagine glycosylation.

It belongs to the oxygen-dependent FAD-linked oxidoreductase family. Requires FAD as cofactor. It depends on a metal cation as a cofactor. The FAD cofactor is bound via a bicovalent 6-S-cysteinyl, 8alpha-N1-histidyl FAD linkage. As to expression, expressed in roots and stems. Not detected in leaves or reproductive organs. Restricted to the parietal region of sieve elements adjacent or proximal to laticifers.

It localises to the cytoplasmic vesicle. It carries out the reaction (S)-reticuline + O2 = (S)-scoulerine + H2O2 + H(+). The protein operates within alkaloid biosynthesis; (S)-scoulerine biosynthesis; (S)-scoulerine from (S)-reticuline: step 1/1. In terms of biological role, oxygen-dependent FAD-dependent oxidoreductase essential to the formation of benzophenanthridine alkaloids in the response of plants to pathogenic attack. Catalyzes the stereospecific conversion of the N-methyl moiety of (S)-reticuline into the berberine bridge carbon of (S)-scoulerine. Involved in the biosynthesis of sanguinarine. The sequence is that of Reticuline oxidase (BBE1) from Papaver somniferum (Opium poppy).